Reading from the N-terminus, the 629-residue chain is Putrebactin synthase (629 aa).

Belongs to the IucA/IucC family. Homodimer.

The enzyme catalyses 2 N-(3-carboxypropanoyl)-N-hydroxyputrescine + 2 ATP = putrebactin + 2 AMP + 2 diphosphate + 2 H(+). The catalysed reaction is 2 N-(3-carboxypropanoyl)-N-hydroxyputrescine + ATP = pre-putrebactin + AMP + diphosphate + H(+). It carries out the reaction pre-putrebactin + ATP = putrebactin + AMP + diphosphate + H(+). It functions in the pathway siderophore biosynthesis. With respect to regulation, requires Mg(2+) for activity. Its function is as follows. Ligase involved in the biosynthesis of the siderophore putrebactin. Catalyzes the ATP-dependent head-to-tail dimerization of N-hydroxy-N-succinyl-putrescine (HSP) to give pre-putrebactin and subsequent macrocyclization of pre-putrebactin to give putrebactin. This Shewanella sp. (strain MR-4) protein is Putrebactin synthase.